The following is a 639-amino-acid chain: UPF0313 protein CLJ_B0249 (639 aa).

A Radical SAM core domain is found at 295-566; that stretch reads AIKEVKFSIT…RMQRSLLQFS (272 aa). Positions 309, 313, and 316 each coordinate [4Fe-4S] cluster. The disordered stretch occupies residues 597–639; it reads YNKPYKKSHKKNNAKNKNNNYNKNKDVSKKNKKNSLSKHKKRK. 2 stretches are compositionally biased toward basic residues: residues 600-610 and 626-639; these read PYKKSHKKNNA and KNKKNSLSKHKKRK.

This sequence belongs to the UPF0313 family. It depends on [4Fe-4S] cluster as a cofactor.

The protein is UPF0313 protein CLJ_B0249 of Clostridium botulinum (strain 657 / Type Ba4).